The chain runs to 187 residues: Peptidyl-tRNA hydrolase (187 aa).

Tyr15 serves as a coordination point for tRNA. The Proton acceptor role is filled by His20. TRNA-binding residues include Phe64, Asn66, and Asn112.

It belongs to the PTH family. In terms of assembly, monomer.

The protein localises to the cytoplasm. The enzyme catalyses an N-acyl-L-alpha-aminoacyl-tRNA + H2O = an N-acyl-L-amino acid + a tRNA + H(+). Hydrolyzes ribosome-free peptidyl-tRNAs (with 1 or more amino acids incorporated), which drop off the ribosome during protein synthesis, or as a result of ribosome stalling. In terms of biological role, catalyzes the release of premature peptidyl moieties from peptidyl-tRNA molecules trapped in stalled 50S ribosomal subunits, and thus maintains levels of free tRNAs and 50S ribosomes. The polypeptide is Peptidyl-tRNA hydrolase (Bacteroides fragilis (strain ATCC 25285 / DSM 2151 / CCUG 4856 / JCM 11019 / LMG 10263 / NCTC 9343 / Onslow / VPI 2553 / EN-2)).